Consider the following 521-residue polypeptide: UDP-N-acetylmuramate--L-alanine ligase (521 aa).

136 to 142 (GAHGKTT) provides a ligand contact to ATP.

Belongs to the MurCDEF family.

Its subcellular location is the cytoplasm. It catalyses the reaction UDP-N-acetyl-alpha-D-muramate + L-alanine + ATP = UDP-N-acetyl-alpha-D-muramoyl-L-alanine + ADP + phosphate + H(+). Its pathway is cell wall biogenesis; peptidoglycan biosynthesis. In terms of biological role, cell wall formation. The protein is UDP-N-acetylmuramate--L-alanine ligase of Bifidobacterium adolescentis (strain ATCC 15703 / DSM 20083 / NCTC 11814 / E194a).